Here is a 264-residue protein sequence, read N- to C-terminus: MAVYEERIPQVKQQRPRRRGNRKLVFLLVLFFLTILIIVFIRSPYSKVQEIRVTGNDIYTTEQVITESGLMKDMQFLNVWENSVRNNLKPLEAIKDVTVSRSFPGLITLHITEQKRVAFWSGQDGSRYALLDNGYVLKQVNFAKRVVDRPLISSWASPELLPHLAKSLSKLSPNVLAEISDITLTPTVYDKQRITLYMRDGNEVRSVIYKLDKMMNWYPAIMKQLPPDTKGVLSLFEQPWFIPYGAQGAIPIQEGQEQPQQPQQ.

Residues 1–23 (MAVYEERIPQVKQQRPRRRGNRK) are Cytoplasmic-facing. A helical transmembrane segment spans residues 24-44 (LVFLLVLFFLTILIIVFIRSP). Over 45 to 264 (YSKVQEIRVT…GQEQPQQPQQ (220 aa)) the chain is Extracellular. The POTRA domain occupies 46-114 (SKVQEIRVTG…GLITLHITEQ (69 aa)).

This sequence belongs to the FtsQ/DivIB family. DivIB subfamily.

It localises to the cell membrane. Cell division protein that may be involved in stabilizing or promoting the assembly of the division complex. The protein is Cell division protein DivIB of Brevibacillus brevis (strain 47 / JCM 6285 / NBRC 100599).